The primary structure comprises 515 residues: U3 small nucleolar RNA-associated protein 15 homolog (515 aa).

7 WD repeats span residues 36–75 (KEFGAVTKIHFSPVQPCTYAVTSSTRIHLYGQYSQEPIKT), 78–117 (RFKDTAYCGTFRGDGKLLAAGCEDSVVQLFDISGKAALRQ), 120–159 (GHSKAVHFVDFTADKYRIVSGSDDYTSRLWDIPNGVEITS), 162–202 (EHTD…SVMS), 204–242 (DHGQPVESVLLFPSGGLLVSAGGRYVKVWDILKGGQLLV), 246–285 (NHHKTVTSLCLSSSGQRLLSASLDRHVKVYSTMNYKVVHS), and 287–326 (DYAASILSLALAPDDQMIVVGMTNGVLNIKHRKPEERKQL).

In terms of assembly, part of the small subunit (SSU) processome, composed of more than 70 proteins and the RNA chaperone small nucleolar RNA (snoRNA) U3. May be a component of the proposed t-UTP subcomplex of the ribosomal small subunit (SSU) processome.

It localises to the nucleus. It is found in the nucleolus. Its function is as follows. Ribosome biogenesis factor. Involved in nucleolar processing of pre-18S ribosomal RNA. Required for optimal pre-ribosomal RNA transcription by RNA polymerase I. Part of the small subunit (SSU) processome, first precursor of the small eukaryotic ribosomal subunit. During the assembly of the SSU processome in the nucleolus, many ribosome biogenesis factors, an RNA chaperone and ribosomal proteins associate with the nascent pre-rRNA and work in concert to generate RNA folding, modifications, rearrangements and cleavage as well as targeted degradation of pre-ribosomal RNA by the RNA exosome. In Xenopus tropicalis (Western clawed frog), this protein is U3 small nucleolar RNA-associated protein 15 homolog (utp15).